A 276-amino-acid polypeptide reads, in one-letter code: F-actin-capping protein subunit alpha (276 aa).

It belongs to the F-actin-capping protein alpha subunit family. As to quaternary structure, heterodimer of an alpha and a beta subunit.

It is found in the cytoplasm. It localises to the cytoskeleton. Functionally, F-actin-capping proteins bind in a Ca(2+)-independent manner to the fast growing ends of actin filaments (barbed end) thereby blocking the exchange of subunits at these ends. Unlike other capping proteins (such as gelsolin and severin), these proteins do not sever actin filaments. This is F-actin-capping protein subunit alpha (cap1) from Aspergillus fumigatus (strain ATCC MYA-4609 / CBS 101355 / FGSC A1100 / Af293) (Neosartorya fumigata).